The primary structure comprises 1024 residues: Carbamoyl phosphate synthase large chain (1024 aa).

The carboxyphosphate synthetic domain stretch occupies residues 1-396 (MDIKKILVIG…AWQKAVRMID (396 aa)). Residues arginine 125, arginine 165, glycine 171, glycine 172, lysine 204, leucine 206, glutamate 211, glycine 237, valine 238, histidine 239, glutamine 280, and glutamate 294 each contribute to the ATP site. One can recognise an ATP-grasp 1 domain in the interval 129 to 323 (QKAMREAGIP…LAYIAAKLAL (195 aa)). The Mg(2+) site is built by glutamine 280, glutamate 294, and asparagine 296. Mn(2+)-binding residues include glutamine 280, glutamate 294, and asparagine 296. Residues 397 to 536 (IGEPGLVGGP…LTYGGQYDDK (140 aa)) form an oligomerization domain region. Residues 536–917 (KTPGVDYLVV…LKSWLSATPN (382 aa)) form a carbamoyl phosphate synthetic domain region. An ATP-grasp 2 domain is found at 660–849 (SKLLDRLGIK…YMSLVADVLT (190 aa)). ATP contacts are provided by arginine 696, lysine 735, glutamate 742, glycine 766, valine 767, histidine 768, serine 769, glutamine 809, and glutamate 820. Positions 809, 820, and 822 each coordinate Mg(2+). Mn(2+) contacts are provided by glutamine 809, glutamate 820, and asparagine 822. One can recognise an MGS-like domain in the interval 917–1024 (NKIPSKTALI…KNGKLEVAPW (108 aa)). Positions 918–1024 (KIPSKTALIY…KNGKLEVAPW (107 aa)) are allosteric domain.

This sequence belongs to the CarB family. Composed of two chains; the small (or glutamine) chain promotes the hydrolysis of glutamine to ammonia, which is used by the large (or ammonia) chain to synthesize carbamoyl phosphate. Tetramer of heterodimers (alpha,beta)4. The cofactor is Mg(2+). Mn(2+) serves as cofactor.

The enzyme catalyses hydrogencarbonate + L-glutamine + 2 ATP + H2O = carbamoyl phosphate + L-glutamate + 2 ADP + phosphate + 2 H(+). It catalyses the reaction hydrogencarbonate + NH4(+) + 2 ATP = carbamoyl phosphate + 2 ADP + phosphate + 2 H(+). It functions in the pathway amino-acid biosynthesis; L-arginine biosynthesis; carbamoyl phosphate from bicarbonate: step 1/1. The protein operates within pyrimidine metabolism; UMP biosynthesis via de novo pathway; (S)-dihydroorotate from bicarbonate: step 1/3. Functionally, large subunit of the glutamine-dependent carbamoyl phosphate synthetase (CPSase). CPSase catalyzes the formation of carbamoyl phosphate from the ammonia moiety of glutamine, carbonate, and phosphate donated by ATP, constituting the first step of 2 biosynthetic pathways, one leading to arginine and/or urea and the other to pyrimidine nucleotides. The large subunit (synthetase) binds the substrates ammonia (free or transferred from glutamine from the small subunit), hydrogencarbonate and ATP and carries out an ATP-coupled ligase reaction, activating hydrogencarbonate by forming carboxy phosphate which reacts with ammonia to form carbamoyl phosphate. The chain is Carbamoyl phosphate synthase large chain from Pyrobaculum aerophilum (strain ATCC 51768 / DSM 7523 / JCM 9630 / CIP 104966 / NBRC 100827 / IM2).